Here is a 382-residue protein sequence, read N- to C-terminus: Beta-1,4-galactosyltransferase 6 (382 aa).

At Met1 to Ser14 the chain is on the cytoplasmic side. Residues Leu15–Ala35 form a helical; Signal-anchor for type II membrane protein membrane-spanning segment. Residues Pro36 to Tyr382 are Lumenal-facing. N-linked (GlcNAc...) asparagine glycans are attached at residues Asn71, Asn75, Asn83, Asn84, Asn99, and Asn122. Cys108 and Cys152 are joined by a disulfide. UDP-alpha-D-galactose contacts are provided by residues Pro163 to Arg167, Phe202 to Arg204, Val229 to Asp230, Tyr258, and Trp290. Cysteines 223 and 242 form a disulfide. Asp230 serves as a coordination point for Mn(2+). Gly292–Asp295 contacts N-acetyl-D-glucosamine. Asn307 is a glycosylation site (N-linked (GlcNAc...) asparagine). His323 is a binding site for Mn(2+). His323 to His324 is a binding site for UDP-alpha-D-galactose. N-acetyl-D-glucosamine is bound at residue Arg334. A glycan (N-linked (GlcNAc...) asparagine) is linked at Asn367.

The protein belongs to the glycosyltransferase 7 family. Mn(2+) serves as cofactor. Requires Mg(2+) as cofactor. As to expression, high expression in brain and adrenal gland, lower in liver, lung, colon and peripheral white blood cells.

The protein resides in the golgi apparatus. Its subcellular location is the golgi stack membrane. It catalyses the reaction a beta-D-glucosyl-(1&lt;-&gt;1')-N-acylsphing-4-enine + UDP-alpha-D-galactose = a beta-D-Gal-(1-&gt;4)-beta-D-Glc-(1&lt;-&gt;1)-Cer(d18:1(4E)) + UDP + H(+). The protein operates within protein modification; protein glycosylation. It participates in sphingolipid metabolism. Inhibited by EDTA. Functionally, catalyzes the synthesis of lactosylceramide (LacCer) via the transfer of galactose from UDP-galactose to glucosylceramide (GlcCer). LacCer is the starting point in the biosynthesis of all gangliosides (membrane-bound glycosphingolipids) which play pivotal roles in the CNS including neuronal maturation and axonal and myelin formation. The polypeptide is Beta-1,4-galactosyltransferase 6 (Homo sapiens (Human)).